A 491-amino-acid chain; its full sequence is Anthranilate synthase component 1 (491 aa).

Residues serine 49 and 271–273 (PYL) contribute to the L-tryptophan site. Chorismate is bound at residue 306–307 (GT). Glutamate 333 lines the Mg(2+) pocket. Chorismate-binding positions include tyrosine 421, arginine 441, 455–457 (GAG), and glycine 457. Glutamate 470 lines the Mg(2+) pocket.

The protein belongs to the anthranilate synthase component I family. Heterotetramer consisting of two non-identical subunits: a beta subunit (TrpG) and a large alpha subunit (TrpE). Requires Mg(2+) as cofactor.

It carries out the reaction chorismate + L-glutamine = anthranilate + pyruvate + L-glutamate + H(+). Its pathway is amino-acid biosynthesis; L-tryptophan biosynthesis; L-tryptophan from chorismate: step 1/5. Its activity is regulated as follows. Feedback inhibited by tryptophan. Its function is as follows. Part of a heterotetrameric complex that catalyzes the two-step biosynthesis of anthranilate, an intermediate in the biosynthesis of L-tryptophan. In the first step, the glutamine-binding beta subunit (TrpG) of anthranilate synthase (AS) provides the glutamine amidotransferase activity which generates ammonia as a substrate that, along with chorismate, is used in the second step, catalyzed by the large alpha subunit of AS (TrpE) to produce anthranilate. In the absence of TrpG, TrpE can synthesize anthranilate directly from chorismate and high concentrations of ammonia. The polypeptide is Anthranilate synthase component 1 (trpE) (Neisseria meningitidis serogroup B (strain ATCC BAA-335 / MC58)).